The following is a 429-amino-acid chain: Enolase (429 aa).

Position 168 (Q168) interacts with (2R)-2-phosphoglycerate. The Proton donor role is filled by E210. Positions 247, 288, and 315 each coordinate Mg(2+). (2R)-2-phosphoglycerate contacts are provided by K340, R369, S370, and K391. K340 acts as the Proton acceptor in catalysis.

It belongs to the enolase family. Requires Mg(2+) as cofactor.

The protein localises to the cytoplasm. It localises to the secreted. Its subcellular location is the cell surface. The enzyme catalyses (2R)-2-phosphoglycerate = phosphoenolpyruvate + H2O. It functions in the pathway carbohydrate degradation; glycolysis; pyruvate from D-glyceraldehyde 3-phosphate: step 4/5. Functionally, catalyzes the reversible conversion of 2-phosphoglycerate (2-PG) into phosphoenolpyruvate (PEP). It is essential for the degradation of carbohydrates via glycolysis. The polypeptide is Enolase (Nostoc sp. (strain PCC 7120 / SAG 25.82 / UTEX 2576)).